A 173-amino-acid polypeptide reads, in one-letter code: Putative C-type lectin protein FPV198 (173 aa).

Positions 50 to 169 (GMSGWVQINN…CNKKHTGICF (120 aa)) constitute a C-type lectin domain.

The sequence is that of Putative C-type lectin protein FPV198 from Vertebrata (FPV).